A 201-amino-acid chain; its full sequence is Small ribosomal subunit protein uS2 (201 aa).

The protein belongs to the universal ribosomal protein uS2 family. As to quaternary structure, part of the 50S ribosomal subunit.

The chain is Small ribosomal subunit protein uS2 from Thermococcus kodakarensis (strain ATCC BAA-918 / JCM 12380 / KOD1) (Pyrococcus kodakaraensis (strain KOD1)).